The following is a 338-amino-acid chain: uncharacterized protein (338 aa).

This is an uncharacterized protein from Bacillus subtilis (strain 168).